Consider the following 291-residue polypeptide: Methionine aminopeptidase (291 aa).

Residue histidine 118 coordinates substrate. A divalent metal cation contacts are provided by aspartate 135, aspartate 146, and histidine 209. Histidine 216 contacts substrate. Glutamate 241 and glutamate 273 together coordinate a divalent metal cation.

This sequence belongs to the peptidase M24A family. Methionine aminopeptidase type 1 subfamily. Monomer. Co(2+) serves as cofactor. It depends on Zn(2+) as a cofactor. Requires Mn(2+) as cofactor. The cofactor is Fe(2+).

The catalysed reaction is Release of N-terminal amino acids, preferentially methionine, from peptides and arylamides.. In terms of biological role, removes the N-terminal methionine from nascent proteins. The N-terminal methionine is often cleaved when the second residue in the primary sequence is small and uncharged (Met-Ala-, Cys, Gly, Pro, Ser, Thr, or Val). Requires deformylation of the N(alpha)-formylated initiator methionine before it can be hydrolyzed. The sequence is that of Methionine aminopeptidase from Chlamydia pneumoniae (Chlamydophila pneumoniae).